A 76-amino-acid polypeptide reads, in one-letter code: Small ribosomal subunit protein bS21A (76 aa).

Basic and acidic residues predominate over residues 35 to 52 (HYEKPSEKRAREKAEAVR). Positions 35 to 76 (HYEKPSEKRAREKAEAVRRARKLARKRAQREGLVSGRPAAAR) are disordered. A compositionally biased stretch (basic residues) spans 53–62 (RARKLARKRA).

The protein belongs to the bacterial ribosomal protein bS21 family.

This Chelativorans sp. (strain BNC1) protein is Small ribosomal subunit protein bS21A.